The primary structure comprises 418 residues: Lactate dehydrogenase (NAD(+),ferredoxin) subunit LctC (418 aa).

FAD contacts are provided by residues Arg-285, 325–328 (IGLS), 343–348 (SGAVQF), Asn-362, and 380–381 (DL).

It belongs to the ETF alpha-subunit/FixB family. Part of the stable heterotrimeric lactate dehydrogenase-Etf complex, which is formed by the lactate dehydrogenase LctD and the electron-transferring flavoprotein (Etf) alpha (LctC) and beta (LctB) subunits. Requires FAD as cofactor. [4Fe-4S] cluster serves as cofactor.

It localises to the cytoplasm. It carries out the reaction lactate + 2 reduced [2Fe-2S]-[ferredoxin] + 2 NAD(+) = 2 oxidized [2Fe-2S]-[ferredoxin] + pyruvate + 2 NADH. With respect to regulation, activity is stimulated by divalent cations. Highest stimulation is observed with Ca(2+). In terms of biological role, the lactate dehydrogenase-Etf complex catalyzes the oxidation of lactate to pyruvate. It uses flavin-based electron confurcation to drive endergonic lactate oxidation with NAD(+) as oxidant at the expense of simultaneous exergonic electron flow from reduced ferredoxin to NAD(+). The electron transfer flavoprotein (Etf) mediates the electron transfer between the different donors and acceptors. The polypeptide is Lactate dehydrogenase (NAD(+),ferredoxin) subunit LctC (Acetobacterium woodii (strain ATCC 29683 / DSM 1030 / JCM 2381 / KCTC 1655 / WB1)).